Reading from the N-terminus, the 1017-residue chain is Protein HIR2 (1017 aa).

WD repeat units lie at residues 10-49, 74-117, 124-163, 167-208, 228-271, 275-326, and 330-371; these read YHNG…ELSK, CHKS…QLFP, SEVN…FQEL, CHEK…DDTS, PLNV…TNIE, GHDF…PITV, and AVQG…YTFS. The interval 417-561 is disordered; sequence ISTTTSSSNT…APSDLPRSNS (145 aa). Residues 473 to 483 show a composition bias toward acidic residues; it reads LDDDIDGDGDD. Polar residues-rich tracts occupy residues 518–535 and 545–561; these read SDST…VTTK and LISS…RSNS.

Belongs to the WD repeat HIR1 family.

The protein resides in the nucleus. In terms of biological role, required for replication-independent chromatin assembly and for the periodic repression of histone gene transcription during the cell cycle. This is Protein HIR2 (HIR2) from Candida albicans (strain SC5314 / ATCC MYA-2876) (Yeast).